Reading from the N-terminus, the 184-residue chain is Endothelial cell-specific molecule 1 (184 aa).

The signal sequence occupies residues 1–19 (MKSVLLLTTLLVPAHLVAA). The 79-residue stretch at 24–102 (YAVDCPQHCD…GEEFGICKDC (79 aa)) folds into the IGFBP N-terminal domain. 6 disulfides stabilise this stretch: Cys-28–Cys-51, Cys-32–Cys-53, Cys-37–Cys-54, Cys-43–Cys-57, Cys-65–Cys-83, and Cys-77–Cys-99. Ser-156 is a glycosylation site (O-linked (Xyl...) (chondroitin sulfate) serine).

In terms of assembly, monomer. In terms of processing, may contain intrachain disulfide bonds. Post-translationally, O-glycosylated; contains chondroitin sulfate and dermatan sulfate. In terms of tissue distribution, expressed in lung, on the vascular capillary network within alveolar walls, and also at lower level in kidney.

Its subcellular location is the secreted. Functionally, involved in angiogenesis; promotes angiogenic sprouting. May have potent implications in lung endothelial cell-leukocyte interactions. This Homo sapiens (Human) protein is Endothelial cell-specific molecule 1 (ESM1).